Here is a 360-residue protein sequence, read N- to C-terminus: Phospho-N-acetylmuramoyl-pentapeptide-transferase (360 aa).

The next 10 membrane-spanning stretches (helical) occupy residues 26-46, 70-90, 94-114, 136-156, 164-184, 199-219, 236-256, 263-283, 289-309, and 339-359; these read GVLA…FFIA, GTPT…TLLW, GNPL…IGFV, LQSL…SNPV, FIPH…YFVI, GLAI…AYVS, SGQM…FLWF, VFMG…VAIV, VLFI…IQVV, and AVRF…SLKI.

Belongs to the glycosyltransferase 4 family. MraY subfamily. It depends on Mg(2+) as a cofactor.

The protein localises to the cell inner membrane. The catalysed reaction is UDP-N-acetyl-alpha-D-muramoyl-L-alanyl-gamma-D-glutamyl-meso-2,6-diaminopimeloyl-D-alanyl-D-alanine + di-trans,octa-cis-undecaprenyl phosphate = di-trans,octa-cis-undecaprenyl diphospho-N-acetyl-alpha-D-muramoyl-L-alanyl-D-glutamyl-meso-2,6-diaminopimeloyl-D-alanyl-D-alanine + UMP. It participates in cell wall biogenesis; peptidoglycan biosynthesis. In terms of biological role, catalyzes the initial step of the lipid cycle reactions in the biosynthesis of the cell wall peptidoglycan: transfers peptidoglycan precursor phospho-MurNAc-pentapeptide from UDP-MurNAc-pentapeptide onto the lipid carrier undecaprenyl phosphate, yielding undecaprenyl-pyrophosphoryl-MurNAc-pentapeptide, known as lipid I. The polypeptide is Phospho-N-acetylmuramoyl-pentapeptide-transferase (Acidithiobacillus ferrooxidans (strain ATCC 23270 / DSM 14882 / CIP 104768 / NCIMB 8455) (Ferrobacillus ferrooxidans (strain ATCC 23270))).